The following is a 184-amino-acid chain: Orotate phosphoribosyltransferase (184 aa).

5-phospho-alpha-D-ribose 1-diphosphate-binding positions include arginine 99, lysine 100, lysine 103, histidine 105, and 125-133 (EDTTTTGNS). Orotate is bound by residues threonine 129 and arginine 157.

Belongs to the purine/pyrimidine phosphoribosyltransferase family. PyrE subfamily. As to quaternary structure, homodimer. The cofactor is Mg(2+).

It catalyses the reaction orotidine 5'-phosphate + diphosphate = orotate + 5-phospho-alpha-D-ribose 1-diphosphate. It functions in the pathway pyrimidine metabolism; UMP biosynthesis via de novo pathway; UMP from orotate: step 1/2. Its function is as follows. Catalyzes the transfer of a ribosyl phosphate group from 5-phosphoribose 1-diphosphate to orotate, leading to the formation of orotidine monophosphate (OMP). The polypeptide is Orotate phosphoribosyltransferase (Corynebacterium glutamicum (strain R)).